The chain runs to 206 residues: MTERRVPFSLLRSPSWEPFRDWYPAHSRLFDQAFGVPRFPDEWSQWFSSAGWPGYVRPLPAATAEGPAAVTLARPAFSRALNRQLSSGVSEIRQTADRWRVSLDVNHFAPEELTVKTKEGVVEITGKHEERQDEHGYISRCFTRKYTLPPGVDPTLVSSSLSPEGTLTVEAPLPKAVTQSAEITIPVTFEARAQIGGPESEQSGAK.

R12 is modified (omega-N-methylarginine). A Phosphoserine modification is found at S13. At S15 the chain carries Phosphoserine; by MAPKAPK2 and MAPKAPK3. The residue at position 27 (S27) is a Phosphoserine. An interaction with TGFB1I1 region spans residues 74 to 206; it reads RPAFSRALNR…GPESEQSGAK (133 aa). A sHSP domain is found at 80–188; that stretch reads ALNRQLSSGV…QSAEITIPVT (109 aa). Residue S86 is modified to Phosphoserine; by MAPKAPK2, MAPKAPK3 and MAPKAPK5. 3 positions are modified to phosphoserine: S87, S90, and S102. The residue at position 127 (K127) is an N6-acetyllysine. A Phosphothreonine modification is found at T178. Phosphoserine occurs at positions 180 and 200.

This sequence belongs to the small heat shock protein (HSP20) family. In terms of assembly, homooligomer. Homodimer; becomes monomeric upon activation. Heterooligomer; with HSPB6. Associates with alpha- and beta-tubulin. Interacts with TGFB1I1. Interacts with CRYAB. Interacts with HSPB8. Interacts with HSPBAP1. Phosphorylated upon exposure to protein kinase C activators and heat shock. Phosphorylation by MAPKAPK2 and MAPKAPK3 in response to stress dissociates HSPB1 from large small heat-shock protein (sHsps) oligomers and impairs its chaperone activity and ability to protect against oxidative stress effectively. Phosphorylation by MAPKAPK5 in response to PKA stimulation induces F-actin rearrangement. Expressed in a variety of tissues. High levels in lung, adrenal, xiphoid, adipose tissue, heart and striated and smooth muscle, lower levels in the CNS. Adult levels are much higher in the slow-twitch soleus muscle than in the fast-twitch rectus femoris and extensor digitorum muscles.

The protein localises to the cytoplasm. Its subcellular location is the nucleus. It is found in the cytoskeleton. The protein resides in the spindle. Its function is as follows. Small heat shock protein which functions as a molecular chaperone probably maintaining denatured proteins in a folding-competent state. Plays a role in stress resistance and actin organization. Through its molecular chaperone activity may regulate numerous biological processes including the phosphorylation and the axonal transport of neurofilament proteins. This is Heat shock protein beta-1 (Hspb1) from Rattus norvegicus (Rat).